An 89-amino-acid chain; its full sequence is Small ribosomal subunit protein uS15 (89 aa).

Belongs to the universal ribosomal protein uS15 family. Part of the 30S ribosomal subunit. Forms a bridge to the 50S subunit in the 70S ribosome, contacting the 23S rRNA.

In terms of biological role, one of the primary rRNA binding proteins, it binds directly to 16S rRNA where it helps nucleate assembly of the platform of the 30S subunit by binding and bridging several RNA helices of the 16S rRNA. Forms an intersubunit bridge (bridge B4) with the 23S rRNA of the 50S subunit in the ribosome. In Mycobacterium avium (strain 104), this protein is Small ribosomal subunit protein uS15.